We begin with the raw amino-acid sequence, 488 residues long: Malonate-semialdehyde dehydrogenase 2 (488 aa).

NAD(+) contacts are provided by phenylalanine 155, lysine 179, glutamate 182, arginine 183, and serine 232. Catalysis depends on cysteine 287, which acts as the Nucleophile. Glutamate 387 serves as a coordination point for NAD(+).

Belongs to the aldehyde dehydrogenase family. IolA subfamily. In terms of assembly, homotetramer.

It carries out the reaction 3-oxopropanoate + NAD(+) + CoA + H2O = hydrogencarbonate + acetyl-CoA + NADH + H(+). The enzyme catalyses 2-methyl-3-oxopropanoate + NAD(+) + CoA + H2O = propanoyl-CoA + hydrogencarbonate + NADH + H(+). The protein operates within polyol metabolism; myo-inositol degradation into acetyl-CoA; acetyl-CoA from myo-inositol: step 7/7. Functionally, catalyzes the oxidation of malonate semialdehyde (MSA) and methylmalonate semialdehyde (MMSA) into acetyl-CoA and propanoyl-CoA, respectively. Is involved in a myo-inositol catabolic pathway. Bicarbonate, and not CO2, is the end-product of the enzymatic reaction. In Bacillus cereus (strain ZK / E33L), this protein is Malonate-semialdehyde dehydrogenase 2.